We begin with the raw amino-acid sequence, 311 residues long: Glutaminase (311 aa).

Substrate-binding residues include S66, N116, E162, N169, Y193, Y245, and V263.

Belongs to the glutaminase family. As to quaternary structure, homotetramer.

The enzyme catalyses L-glutamine + H2O = L-glutamate + NH4(+). The chain is Glutaminase from Rhodopseudomonas palustris (strain BisB5).